A 173-amino-acid polypeptide reads, in one-letter code: Small ribosomal subunit protein uS5 (173 aa).

The region spanning 17–80 (WQERVIQIRR…ADGKKQLIEV (64 aa)) is the S5 DRBM domain.

Belongs to the universal ribosomal protein uS5 family. Part of the 30S ribosomal subunit. Contacts proteins S4 and S8.

Its function is as follows. With S4 and S12 plays an important role in translational accuracy. Functionally, located at the back of the 30S subunit body where it stabilizes the conformation of the head with respect to the body. In Synechocystis sp. (strain ATCC 27184 / PCC 6803 / Kazusa), this protein is Small ribosomal subunit protein uS5.